Reading from the N-terminus, the 242-residue chain is Probable transcriptional regulatory protein XAC3151 (242 aa).

This sequence belongs to the TACO1 family.

The protein localises to the cytoplasm. In Xanthomonas axonopodis pv. citri (strain 306), this protein is Probable transcriptional regulatory protein XAC3151.